The primary structure comprises 609 residues: Nuclear factor 7, brain (609 aa).

The Tudor-knot domain occupies 21 to 75; it reads NVGSTYPCKRSDGSQHDAEIVKVRYNKQAGREEYYAHYVGLNRRQNEWVDKSRLV. A compositionally biased stretch (basic and acidic residues) spans 74–84; sequence LVLTKPPKEGE. A disordered region spans residues 74–129; the sequence is LVLTKPPKEGETNGTDQEVTDTAEQPDSKTPQKRKIEEPEPEPKKAKVEEKDASKN. Residues 85–102 show a composition bias toward polar residues; it reads TNGTDQEVTDTAEQPDSK. Phosphothreonine; by CDK1 is present on Thr103. The segment covering 107-127 has biased composition (basic and acidic residues); that stretch reads RKIEEPEPEPKKAKVEEKDAS. The RING-type zinc-finger motif lies at 145-185; that stretch reads CPLCVELFKDPVMVACGHNFCRSCIDKAWEGQSSFACPECR. The segment at 219–260 adopts a B box-type zinc-finger fold; sequence RPLEKCSEHDERLKLYCKDDGTLSCVICRDSLKHASHNFLPI. Zn(2+) contacts are provided by Cys224, His227, Cys246, and His252. Residues 278–371 adopt a coiled-coil conformation; sequence LEASLKVTEQ…SLAKERMEDT (94 aa). The 197-residue stretch at 413 to 609 folds into the B30.2/SPRY domain; the sequence is GPIQYIMWKE…VDPLRFVHNK (197 aa).

Monomer. In terms of processing, threonine (predominantly) and serine residues are phosphorylated during oocyte maturation, when CDK1 is active. In terms of tissue distribution, at the neurula stage, high expression in dorsal embryo region including neural folds and somites. Also high expression in adult brain (CNS) and low expression in oocytes.

It localises to the nucleus. Transcription factor that determines dorsal-ventral body axis. The protein is Nuclear factor 7, brain of Xenopus laevis (African clawed frog).